Reading from the N-terminus, the 310-residue chain is Oxygen-dependent coproporphyrinogen-III oxidase (310 aa).

S93 serves as a coordination point for substrate. The a divalent metal cation site is built by H97 and H107. H107 functions as the Proton donor in the catalytic mechanism. 109–111 (NVR) is a binding site for substrate. Residues H146 and H176 each contribute to the a divalent metal cation site. Residues 241-276 (YVEFNLVYDRGTLFGLQSGGRTESILMSLPPQVRWS) are important for dimerization. 259-261 (GGR) provides a ligand contact to substrate.

This sequence belongs to the aerobic coproporphyrinogen-III oxidase family. Homodimer. The cofactor is a divalent metal cation.

The protein localises to the cytoplasm. It catalyses the reaction coproporphyrinogen III + O2 + 2 H(+) = protoporphyrinogen IX + 2 CO2 + 2 H2O. It participates in porphyrin-containing compound metabolism; protoporphyrin-IX biosynthesis; protoporphyrinogen-IX from coproporphyrinogen-III (O2 route): step 1/1. Involved in the heme biosynthesis. Catalyzes the aerobic oxidative decarboxylation of propionate groups of rings A and B of coproporphyrinogen-III to yield the vinyl groups in protoporphyrinogen-IX. The chain is Oxygen-dependent coproporphyrinogen-III oxidase from Pseudomonas fluorescens (strain SBW25).